Consider the following 416-residue polypeptide: NADH-quinone oxidoreductase subunit D (416 aa).

It belongs to the complex I 49 kDa subunit family. In terms of assembly, NDH-1 is composed of 14 different subunits. Subunits NuoB, C, D, E, F, and G constitute the peripheral sector of the complex.

The protein resides in the cell inner membrane. The catalysed reaction is a quinone + NADH + 5 H(+)(in) = a quinol + NAD(+) + 4 H(+)(out). NDH-1 shuttles electrons from NADH, via FMN and iron-sulfur (Fe-S) centers, to quinones in the respiratory chain. The immediate electron acceptor for the enzyme in this species is believed to be ubiquinone. Couples the redox reaction to proton translocation (for every two electrons transferred, four hydrogen ions are translocated across the cytoplasmic membrane), and thus conserves the redox energy in a proton gradient. The sequence is that of NADH-quinone oxidoreductase subunit D from Caulobacter sp. (strain K31).